The sequence spans 340 residues: Phosphoribosylformylglycinamidine cyclo-ligase (340 aa).

The protein belongs to the AIR synthase family.

The protein localises to the cytoplasm. It catalyses the reaction 2-formamido-N(1)-(5-O-phospho-beta-D-ribosyl)acetamidine + ATP = 5-amino-1-(5-phospho-beta-D-ribosyl)imidazole + ADP + phosphate + H(+). It functions in the pathway purine metabolism; IMP biosynthesis via de novo pathway; 5-amino-1-(5-phospho-D-ribosyl)imidazole from N(2)-formyl-N(1)-(5-phospho-D-ribosyl)glycinamide: step 2/2. The protein is Phosphoribosylformylglycinamidine cyclo-ligase of Streptococcus pneumoniae serotype 2 (strain D39 / NCTC 7466).